A 373-amino-acid chain; its full sequence is Nuclear hormone receptor family member nhr-69 (373 aa).

The segment at residues 3-78 is a DNA-binding region (nuclear receptor); the sequence is EEICHICNDK…AGMKSNAIQN (76 aa). 2 NR C4-type zinc fingers span residues 6–26 and 42–66; these read CHICNDKSTGKHYGAISCDGC and CRFEQNCDVTKNKRNACRACRLQKC. An NR LBD domain is found at 93–344; that stretch reads EKEDLIDQLV…SLMEELILND (252 aa).

It belongs to the nuclear hormone receptor family. As to quaternary structure, interacts with R-SMAD daf-8. As to expression, expressed in the ASI neurons, hypodermis, and in tail neurons.

Its subcellular location is the nucleus. Orphan nuclear receptor which, in cooperation with R-SMAD daf-8, modulates the Insulin/IGF-1-like signaling (IIS) pathway, perhaps by regulating expression of the potassium channel exp-2, which in turn modulates the secretion of insulin-like peptide daf-28. In Caenorhabditis elegans, this protein is Nuclear hormone receptor family member nhr-69 (nhr-69).